The primary structure comprises 182 residues: Troponin I, fast skeletal muscle (182 aa).

Position 2 is an N-acetylglycine (G2). Residues 2–48 are involved in binding TNC; it reads GDEEKRNRAITARRQHLKSVMLQIAATELEKEEGRREAEKQNYLAEH. The residue at position 12 (T12) is a Phosphothreonine; by PHK. The tract at residues 97-117 is involved in binding TNC and actin; sequence NQKLFDLRGKFKRPPLRRVRM. S118 bears the Phosphoserine; by PKA mark.

It belongs to the troponin I family. Binds to actin and tropomyosin.

Functionally, troponin I is the inhibitory subunit of troponin, the thin filament regulatory complex which confers calcium-sensitivity to striated muscle actomyosin ATPase activity. The chain is Troponin I, fast skeletal muscle (TNNI2) from Oryctolagus cuniculus (Rabbit).